A 209-amino-acid polypeptide reads, in one-letter code: Large ribosomal subunit protein bL25 (209 aa).

2 disordered regions span residues 1–20 (MSKSYTLKAEKRERVGKGSS) and 190–209 (LDVSDETSEQEKDEGETQTS). A compositionally biased stretch (basic and acidic residues) spans 8 to 20 (KAEKRERVGKGSS). A compositionally biased stretch (acidic residues) spans 192–209 (VSDETSEQEKDEGETQTS).

Belongs to the bacterial ribosomal protein bL25 family. CTC subfamily. As to quaternary structure, part of the 50S ribosomal subunit; part of the 5S rRNA/L5/L18/L25 subcomplex. Contacts the 5S rRNA. Binds to the 5S rRNA independently of L5 and L18.

This is one of the proteins that binds to the 5S RNA in the ribosome where it forms part of the central protuberance. This Bartonella tribocorum (strain CIP 105476 / IBS 506) protein is Large ribosomal subunit protein bL25.